The primary structure comprises 388 residues: Chorismate synthase (388 aa).

2 residues coordinate NADP(+): Arg39 and Arg45. Residues 130 to 132 (RSS), 251 to 252 (NA), Gly296, 311 to 315 (KPIPT), and Arg337 contribute to the FMN site.

It belongs to the chorismate synthase family. In terms of assembly, homotetramer. The cofactor is FMNH2.

The enzyme catalyses 5-O-(1-carboxyvinyl)-3-phosphoshikimate = chorismate + phosphate. The protein operates within metabolic intermediate biosynthesis; chorismate biosynthesis; chorismate from D-erythrose 4-phosphate and phosphoenolpyruvate: step 7/7. In terms of biological role, catalyzes the anti-1,4-elimination of the C-3 phosphate and the C-6 proR hydrogen from 5-enolpyruvylshikimate-3-phosphate (EPSP) to yield chorismate, which is the branch point compound that serves as the starting substrate for the three terminal pathways of aromatic amino acid biosynthesis. This reaction introduces a second double bond into the aromatic ring system. The chain is Chorismate synthase from Geobacillus thermodenitrificans (strain NG80-2).